Reading from the N-terminus, the 255-residue chain is 4-hydroxy-tetrahydrodipicolinate reductase (255 aa).

NAD(+) is bound by residues 9 to 14 (GYRGKM), 89 to 91 (GTT), and 115 to 118 (APNF). His-145 serves as the catalytic Proton donor/acceptor. His-146 provides a ligand contact to (S)-2,3,4,5-tetrahydrodipicolinate. Lys-149 (proton donor) is an active-site residue. 155-156 (GT) serves as a coordination point for (S)-2,3,4,5-tetrahydrodipicolinate.

Belongs to the DapB family.

It localises to the cytoplasm. It carries out the reaction (S)-2,3,4,5-tetrahydrodipicolinate + NAD(+) + H2O = (2S,4S)-4-hydroxy-2,3,4,5-tetrahydrodipicolinate + NADH + H(+). It catalyses the reaction (S)-2,3,4,5-tetrahydrodipicolinate + NADP(+) + H2O = (2S,4S)-4-hydroxy-2,3,4,5-tetrahydrodipicolinate + NADPH + H(+). It functions in the pathway amino-acid biosynthesis; L-lysine biosynthesis via DAP pathway; (S)-tetrahydrodipicolinate from L-aspartate: step 4/4. Catalyzes the conversion of 4-hydroxy-tetrahydrodipicolinate (HTPA) to tetrahydrodipicolinate. This chain is 4-hydroxy-tetrahydrodipicolinate reductase, found in Streptococcus uberis (strain ATCC BAA-854 / 0140J).